A 264-amino-acid polypeptide reads, in one-letter code: Small ribosomal subunit protein uS2 (264 aa).

This sequence belongs to the universal ribosomal protein uS2 family.

This Helicobacter pylori (strain ATCC 700392 / 26695) (Campylobacter pylori) protein is Small ribosomal subunit protein uS2 (rpsB).